The primary structure comprises 330 residues: tRNA U34 carboxymethyltransferase (330 aa).

Residues Lys-91, Trp-105, Lys-110, Gly-130, 152-154 (DPS), 181-182 (IE), Met-196, Tyr-200, and Arg-315 contribute to the carboxy-S-adenosyl-L-methionine site.

It belongs to the class I-like SAM-binding methyltransferase superfamily. CmoB family. In terms of assembly, homotetramer.

The catalysed reaction is carboxy-S-adenosyl-L-methionine + 5-hydroxyuridine(34) in tRNA = 5-carboxymethoxyuridine(34) in tRNA + S-adenosyl-L-homocysteine + H(+). In terms of biological role, catalyzes carboxymethyl transfer from carboxy-S-adenosyl-L-methionine (Cx-SAM) to 5-hydroxyuridine (ho5U) to form 5-carboxymethoxyuridine (cmo5U) at position 34 in tRNAs. This chain is tRNA U34 carboxymethyltransferase, found in Shewanella amazonensis (strain ATCC BAA-1098 / SB2B).